The primary structure comprises 423 residues: Adenylosuccinate synthetase (423 aa).

Residues 12–18 (GDEGKGK) and 40–42 (GHT) contribute to the GTP site. Asp-13 (proton acceptor) is an active-site residue. Positions 13 and 40 each coordinate Mg(2+). IMP contacts are provided by residues 13 to 16 (DEGK), 38 to 41 (NAGH), Thr-128, Arg-142, Gln-223, Thr-238, and Arg-302. Catalysis depends on His-41, which acts as the Proton donor. 298-304 (TTTGRPR) provides a ligand contact to substrate. GTP-binding positions include Arg-304, 330–332 (RLD), and 412–414 (CIG).

It belongs to the adenylosuccinate synthetase family. As to quaternary structure, homodimer. The cofactor is Mg(2+).

The protein resides in the cytoplasm. The catalysed reaction is IMP + L-aspartate + GTP = N(6)-(1,2-dicarboxyethyl)-AMP + GDP + phosphate + 2 H(+). The protein operates within purine metabolism; AMP biosynthesis via de novo pathway; AMP from IMP: step 1/2. Functionally, plays an important role in the de novo pathway of purine nucleotide biosynthesis. Catalyzes the first committed step in the biosynthesis of AMP from IMP. The sequence is that of Adenylosuccinate synthetase from Dehalococcoides mccartyi (strain ATCC BAA-2266 / KCTC 15142 / 195) (Dehalococcoides ethenogenes (strain 195)).